Here is a 53-residue protein sequence, read N- to C-terminus: UPF0391 membrane protein Patl_1732 (53 aa).

Transmembrane regions (helical) follow at residues 4–24 (WAVI…GGIA) and 28–48 (AGIA…SVVM).

The protein belongs to the UPF0391 family.

The protein localises to the cell membrane. The polypeptide is UPF0391 membrane protein Patl_1732 (Pseudoalteromonas atlantica (strain T6c / ATCC BAA-1087)).